Here is a 446-residue protein sequence, read N- to C-terminus: Tubulin beta-2 chain (446 aa).

GTP-binding residues include Gln-11, Glu-69, Ser-138, Gly-142, Thr-143, Gly-144, Asn-204, and Asn-226. A Mg(2+)-binding site is contributed by Glu-69. A disordered region spans residues 424–446; sequence QYQEATADEEGEFDEDEEGGGDE. Residues 429–446 are compositionally biased toward acidic residues; that stretch reads TADEEGEFDEDEEGGGDE.

The protein belongs to the tubulin family. As to quaternary structure, dimer of alpha and beta chains. A typical microtubule is a hollow water-filled tube with an outer diameter of 25 nm and an inner diameter of 15 nM. Alpha-beta heterodimers associate head-to-tail to form protofilaments running lengthwise along the microtubule wall with the beta-tubulin subunit facing the microtubule plus end conferring a structural polarity. Microtubules usually have 13 protofilaments but different protofilament numbers can be found in some organisms and specialized cells. Requires Mg(2+) as cofactor.

The protein localises to the cytoplasm. It localises to the cytoskeleton. Tubulin is the major constituent of microtubules, a cylinder consisting of laterally associated linear protofilaments composed of alpha- and beta-tubulin heterodimers. Microtubules grow by the addition of GTP-tubulin dimers to the microtubule end, where a stabilizing cap forms. Below the cap, tubulin dimers are in GDP-bound state, owing to GTPase activity of alpha-tubulin. This chain is Tubulin beta-2 chain (betaTub85D), found in Drosophila erecta (Fruit fly).